A 293-amino-acid chain; its full sequence is L-ornithine N(alpha)-acyltransferase (293 aa).

This sequence belongs to the acetyltransferase family. OlsB subfamily.

It carries out the reaction a (3R)-hydroxyacyl-[ACP] + L-ornithine = a lyso-ornithine lipid + holo-[ACP] + H(+). It functions in the pathway lipid metabolism. Functionally, catalyzes the first step in the biosynthesis of ornithine lipids, which are phosphorus-free membrane lipids. Catalyzes the 3-hydroxyacyl-acyl carrier protein-dependent acylation of ornithine to form lyso-ornithine lipid (LOL). The chain is L-ornithine N(alpha)-acyltransferase from Agrobacterium fabrum (strain C58 / ATCC 33970) (Agrobacterium tumefaciens (strain C58)).